The following is a 347-amino-acid chain: N-acetyl-gamma-glutamyl-phosphate reductase (347 aa).

Cys152 is a catalytic residue.

It belongs to the NAGSA dehydrogenase family. Type 1 subfamily.

It localises to the cytoplasm. It carries out the reaction N-acetyl-L-glutamate 5-semialdehyde + phosphate + NADP(+) = N-acetyl-L-glutamyl 5-phosphate + NADPH + H(+). The protein operates within amino-acid biosynthesis; L-arginine biosynthesis; N(2)-acetyl-L-ornithine from L-glutamate: step 3/4. Functionally, catalyzes the NADPH-dependent reduction of N-acetyl-5-glutamyl phosphate to yield N-acetyl-L-glutamate 5-semialdehyde. This is N-acetyl-gamma-glutamyl-phosphate reductase from Neisseria gonorrhoeae (strain NCCP11945).